Consider the following 186-residue polypeptide: Ribosome-recycling factor (186 aa).

Belongs to the RRF family.

The protein resides in the cytoplasm. Its function is as follows. Responsible for the release of ribosomes from messenger RNA at the termination of protein biosynthesis. May increase the efficiency of translation by recycling ribosomes from one round of translation to another. The chain is Ribosome-recycling factor from Bartonella henselae (strain ATCC 49882 / DSM 28221 / CCUG 30454 / Houston 1) (Rochalimaea henselae).